A 398-amino-acid chain; its full sequence is MSQKLVLILNCGSSSLKFAILDPVSGAEKLSGLAEAFYLPDARIKWKLNGEKGNADLGAGAAHSEALNFIVSTILTEDLKNSIAAIGHRVVHGGEKYTKSVVITDEVIQGIKDAAEFAPLHNPAHLIGIEEAFKAFPHLKDNNVAVFDTAFHQTMPEEAFLYALPYSLYKEHGVRRYGMHGTSHYFVSREAAKRLNIAEDKINVITCHLGNGASVAAIRQGKCIDTSMGFTPLEGLVMGTRSGDLDPAIIFYMHNTLGMSVAQIEETLVKKSGLLGLTEVTSDCRYSEDNYEKESAAKRALDVFCYRLAKYIGSYMAIIGENLDAIVFTGGIGENAALVRQITLNHLKLFGYKIDDEKNSAARFGNEGVITADNTPIAIVIPTNEELVIAQDTARLSF.

Residue N10 coordinates Mg(2+). K17 serves as a coordination point for ATP. A substrate-binding site is contributed by R89. Catalysis depends on D148, which acts as the Proton donor/acceptor. Residues 208 to 212 (HLGNG), 283 to 285 (DCR), and 331 to 335 (GIGEN) each bind ATP. E385 contributes to the Mg(2+) binding site.

It belongs to the acetokinase family. Homodimer. Mg(2+) serves as cofactor. The cofactor is Mn(2+).

The protein resides in the cytoplasm. It carries out the reaction acetate + ATP = acetyl phosphate + ADP. The protein operates within metabolic intermediate biosynthesis; acetyl-CoA biosynthesis; acetyl-CoA from acetate: step 1/2. Functionally, catalyzes the formation of acetyl phosphate from acetate and ATP. Can also catalyze the reverse reaction. The chain is Acetate kinase from Histophilus somni (strain 2336) (Haemophilus somnus).